The following is a 718-amino-acid chain: Sodium/myo-inositol cotransporter (718 aa).

The Extracellular segment spans residues 1 to 9; that stretch reads MRAVLDTAD. The helical transmembrane segment at 10-29 threads the bilayer; the sequence is IAIVALYFILVMCIGFFAMW. Residues 30–38 are Cytoplasmic-facing; that stretch reads KSNRSTVSG. A helical transmembrane segment spans residues 39 to 57; that stretch reads YFLAGRSMTWVAIGASLFV. At 58–86 the chain is on the extracellular side; that stretch reads SNIGSEHFIGLAGSGAASGFAVGAWEFNA. Residues 87 to 110 form a helical membrane-spanning segment; it reads LLLLQLLGWVFIPIYIRSGVYTMP. The Cytoplasmic segment spans residues 111–123; the sequence is EYLSKRFGGHRIQ. A helical transmembrane segment spans residues 124 to 144; that stretch reads VYFAALSLILYIFTKLSVDLY. Over 145–157 the chain is Extracellular; that stretch reads SGALFIQESLGWN. Residues 158 to 183 form a helical membrane-spanning segment; the sequence is LYVSVILLIGMTALLTVTGGLVAVIY. Over 184–186 the chain is Cytoplasmic; the sequence is TDT. The chain crosses the membrane as a helical span at residues 187 to 205; the sequence is LQALLMIIGALTLMIISIM. Over 206 to 303 the chain is Extracellular; sequence EIGGFEEVKR…HAKGSTLMAG (98 aa). N232 is a glycosylation site (N-linked (GlcNAc...) asparagine). Residues 304–324 form a helical membrane-spanning segment; that stretch reads FLKLLPMFIIVVPGMISRILF. Topologically, residues 325–353 are cytoplasmic; sequence TDDIACINPEHCMLVCGSRAGCSNIAYPR. A helical membrane pass occupies residues 354–376; the sequence is LVMKLVPVGLRGLMMAVMIAALM. Topologically, residues 377-406 are extracellular; it reads SDLDSIFNSASTIFTLDVYKLIRKSASSRE. The helical transmembrane segment at 407 to 430 threads the bilayer; sequence LMIVGRIFVAFMVVISIAWVPIIV. Residues 431–443 are Cytoplasmic-facing; that stretch reads EMQGGQMYLYIQE. Residues 444–462 traverse the membrane as a helical segment; that stretch reads VADYLTPPVAALFLLAIFW. Over 463–510 the chain is Extracellular; sequence KRCNEQGAFYGGMAGFVLGAVRLILAFAYRAPECDQPDNRPGFIKDIH. The chain crosses the membrane as a helical span at residues 511-532; that stretch reads YMYVATGLFWVTGLITVIVSLL. Topologically, residues 533–695 are cytoplasmic; the sequence is TPPPTKEQIR…QMLEETRQVK (163 aa). Phosphoserine occurs at positions 594 and 632. A helical transmembrane segment spans residues 696–716; the sequence is VILNIGLFAVCSLGIFMFVYF. Over 717-718 the chain is Extracellular; that stretch reads SL.

This sequence belongs to the sodium:solute symporter (SSF) (TC 2.A.21) family. Interacts with KCNQ2 (via the pore module). Interacts with KCNQ1; this interaction is direct. Forms coregulatory complexes with ion channels KCNQ2-KCNQ3 and KCNQ1-KCNE2.

It is found in the apical cell membrane. Its subcellular location is the basolateral cell membrane. The enzyme catalyses myo-inositol(out) + 2 Na(+)(out) = myo-inositol(in) + 2 Na(+)(in). It catalyses the reaction scyllo-inositol(out) + 2 Na(+)(out) = scyllo-inositol(in) + 2 Na(+)(in). Its function is as follows. Electrogenic Na(+)-coupled sugar symporter that actively transports myo-inositol and its stereoisomer scyllo-inositol across the plasma membrane, with a Na(+) to sugar coupling ratio of 2:1. Maintains myo-inositol concentration gradient that defines cell volume and fluid balance during osmotic stress, in particular in the fetoplacental unit and central nervous system. Forms coregulatory complexes with voltage-gated K(+) ion channels, allosterically altering ion selectivity, voltage dependence and gating kinetics of the channel. In turn, K(+) efflux through the channel forms a local electrical gradient that modulates electrogenic Na(+)-coupled myo-inositol influx through the transporter. Associates with KCNQ1-KCNE2 channel in the apical membrane of choroid plexus epithelium and regulates the myo-inositol gradient between blood and cerebrospinal fluid with an impact on neuron excitability. Associates with KCNQ2-KCNQ3 channel altering ion selectivity, increasing Na(+) and Cs(+) permeation relative to K(+) permeation. Provides myo-inositol precursor for biosynthesis of phosphoinositides such as PI(4,5)P2, thus indirectly affecting the activity of phosphoinositide-dependent ion channels and Ca(2+) signaling upon osmotic stress. The chain is Sodium/myo-inositol cotransporter from Homo sapiens (Human).